Consider the following 508-residue polypeptide: Erythropoietin receptor (508 aa).

An N-terminal signal peptide occupies residues 1–24; the sequence is MDHLGASLWPQVGSLCLLLAGAAW. Residues 25–250 lie on the Extracellular side of the membrane; the sequence is APPPNLPDPK…SLLTPSDLDP (226 aa). A disulfide bond links cysteine 52 and cysteine 62. Asparagine 76 is a glycosylation site (N-linked (GlcNAc...) asparagine). The cysteines at positions 91 and 107 are disulfide-linked. A Fibronectin type-III domain is found at 147–247; it reads APVGLVARLA…EPVSLLTPSD (101 aa). The WSXWS motif signature appears at 233 to 237; that stretch reads WSAWS. The helical transmembrane segment at 251–273 threads the bilayer; it reads LILTLSLILVVILVLLTVLALLS. Over 274 to 508 the chain is Cytoplasmic; the sequence is HRRALKQKIW…PLPPSYVACS (235 aa). Lysine 281 participates in a covalent cross-link: Glycyl lysine isopeptide (Lys-Gly) (interchain with G-Cter in ubiquitin). Positions 282-290 match the Box 1 motif motif; it reads IWPGIPSPE. 2 positions are modified to phosphotyrosine; by JAK2: tyrosine 368 and tyrosine 426. Positions 452–457 match the ITIM motif motif; the sequence is LKYLYL. Lysine 453 is covalently cross-linked (Glycyl lysine isopeptide (Lys-Gly) (interchain with G-Cter in ubiquitin)). Tyrosine 454, tyrosine 456, tyrosine 468, tyrosine 485, tyrosine 489, and tyrosine 504 each carry phosphotyrosine; by JAK2. Positions 454–456 are required for high-affinity SOCS3 binding; it reads YLY. Positions 467–494 are disordered; the sequence is DYSSGDSQGAQGGLSDGPYSNPYENSLI.

It belongs to the type I cytokine receptor family. Type 1 subfamily. In terms of assembly, forms homodimers on EPO stimulation. The tyrosine-phosphorylated form interacts with several SH2 domain-containing proteins including LYN, the adapter protein SH2B2, PTPN6, PTPN11, JAK2, PI3 kinases, STAT5A/B, SOCS3, CRKL. Interacts with INPP5D/SHIP1. SH2B2 binding inhibits the JAK-STAT signaling. Interacts with RHEX; this interaction occurs in a erythropoietin (EPO)-dependent manner. Interacts with ATXN2L. Post-translationally, on EPO stimulation, phosphorylated on C-terminal tyrosine residues by JAK2. The phosphotyrosine motifs are also recruitment sites for several SH2-containing proteins and adapter proteins which mediate cell proliferation. Phosphorylation on Tyr-454 is required for PTPN6 interaction, Tyr-426 for PTPN11. Tyr-426 is also required for SOCS3 binding, but Tyr-454/Tyr-456 motif is the preferred binding site. In terms of processing, ubiquitinated by the ECS(SOCS2) complex following ligand-binding and phosphorylation by JAK2, leading to its degradation by the proteasome. Regulation by the ECS(SOCS2) complex acts as a negative feedback loop of erythropoietin-mediated signaling pathway. Ubiquitination at Lys-281 mediates receptor internalization, whereas ubiquitination at Lys-453 promotes trafficking of activated receptors to the lysosomes for degradation. Ubiquitinated by NOSIP; appears to be either multi-monoubiquitinated or polyubiquitinated. Ubiquitination mediates proliferation and survival of EPO-dependent cells. In terms of tissue distribution, erythroid cells and erythroid progenitor cells. As to expression, isoform EPOR-F is the most abundant form in EPO-dependent erythroleukemia cells and in late-stage erythroid progenitors. Isoform EPOR-S and isoform EPOR-T are the predominant forms in bone marrow. In terms of tissue distribution, isoform EPOR-S and isoform EPOR-T are the predominant forms in bone marrow. Isoform EPOR-T is the most abundant from in early-stage erythroid progenitor cells.

The protein resides in the cell membrane. Its subcellular location is the secreted. Receptor for erythropoietin, which mediates erythropoietin-induced erythroblast proliferation and differentiation. Upon EPO stimulation, EPOR dimerizes triggering the JAK2/STAT5 signaling cascade. In some cell types, can also activate STAT1 and STAT3. May also activate the LYN tyrosine kinase. Functionally, acts as a dominant-negative receptor of EPOR-mediated signaling. The protein is Erythropoietin receptor of Homo sapiens (Human).